Here is a 118-residue protein sequence, read N- to C-terminus: Na(+)/H(+) antiporter subunit G1 (118 aa).

The next 3 helical transmembrane spans lie at 9–29, 47–67, and 69–89; these read VSII…TGLI, LGAM…EGYV, and MQLI…SHLI.

This sequence belongs to the CPA3 antiporters (TC 2.A.63) subunit G family. In terms of assembly, may form a heterooligomeric complex that consists of seven subunits: mnhA1, mnhB1, mnhC1, mnhD1, mnhE1, mnhF1 and mnhG1.

Its subcellular location is the cell membrane. Its function is as follows. Mnh complex is a Na(+)/H(+) antiporter involved in Na(+) excretion. The sequence is that of Na(+)/H(+) antiporter subunit G1 (mnhG1) from Staphylococcus epidermidis (strain ATCC 35984 / DSM 28319 / BCRC 17069 / CCUG 31568 / BM 3577 / RP62A).